Here is a 255-residue protein sequence, read N- to C-terminus: Thiazole synthase (255 aa).

Lysine 96 acts as the Schiff-base intermediate with DXP in catalysis. 1-deoxy-D-xylulose 5-phosphate-binding positions include glycine 157, 183 to 184, and 205 to 206; these read AG and NT.

Belongs to the ThiG family. As to quaternary structure, homotetramer. Forms heterodimers with either ThiH or ThiS.

It localises to the cytoplasm. It catalyses the reaction [ThiS sulfur-carrier protein]-C-terminal-Gly-aminoethanethioate + 2-iminoacetate + 1-deoxy-D-xylulose 5-phosphate = [ThiS sulfur-carrier protein]-C-terminal Gly-Gly + 2-[(2R,5Z)-2-carboxy-4-methylthiazol-5(2H)-ylidene]ethyl phosphate + 2 H2O + H(+). It participates in cofactor biosynthesis; thiamine diphosphate biosynthesis. Functionally, catalyzes the rearrangement of 1-deoxy-D-xylulose 5-phosphate (DXP) to produce the thiazole phosphate moiety of thiamine. Sulfur is provided by the thiocarboxylate moiety of the carrier protein ThiS. In vitro, sulfur can be provided by H(2)S. The chain is Thiazole synthase from Bacillus pumilus (strain SAFR-032).